The sequence spans 465 residues: UDP-N-acetylmuramate--L-alanine ligase (465 aa).

An ATP-binding site is contributed by 115-121 (GTHGKTT).

It belongs to the MurCDEF family.

It is found in the cytoplasm. It catalyses the reaction UDP-N-acetyl-alpha-D-muramate + L-alanine + ATP = UDP-N-acetyl-alpha-D-muramoyl-L-alanine + ADP + phosphate + H(+). It participates in cell wall biogenesis; peptidoglycan biosynthesis. Its function is as follows. Cell wall formation. In Renibacterium salmoninarum (strain ATCC 33209 / DSM 20767 / JCM 11484 / NBRC 15589 / NCIMB 2235), this protein is UDP-N-acetylmuramate--L-alanine ligase.